The following is a 200-amino-acid chain: Glycerol-3-phosphate acyltransferase (200 aa).

Transmembrane regions (helical) follow at residues 2-22 (FNIP…AVIV), 51-71 (KAAA…VLLA), 84-104 (AIAA…FFGF), 114-134 (LGVL…IWLV), and 159-179 (FFMP…LVLF).

It belongs to the PlsY family. Probably interacts with PlsX.

It localises to the cell inner membrane. It carries out the reaction an acyl phosphate + sn-glycerol 3-phosphate = a 1-acyl-sn-glycero-3-phosphate + phosphate. Its pathway is lipid metabolism; phospholipid metabolism. Catalyzes the transfer of an acyl group from acyl-phosphate (acyl-PO(4)) to glycerol-3-phosphate (G3P) to form lysophosphatidic acid (LPA). This enzyme utilizes acyl-phosphate as fatty acyl donor, but not acyl-CoA or acyl-ACP. In Neisseria meningitidis serogroup B (strain ATCC BAA-335 / MC58), this protein is Glycerol-3-phosphate acyltransferase.